The sequence spans 308 residues: Transcription initiation factor IIB (308 aa).

Repeat copies occupy residues 124–207 (NELE…LREL) and 218–299 (DYVT…ELTQ).

Belongs to the TFIIB family.

In terms of biological role, stabilizes TBP binding to an archaeal box-A promoter. Also responsible for recruiting RNA polymerase II to the pre-initiation complex (DNA-TBP-TFIIB). This is Transcription initiation factor IIB from Sulfurisphaera tokodaii (strain DSM 16993 / JCM 10545 / NBRC 100140 / 7) (Sulfolobus tokodaii).